The chain runs to 245 residues: Photosystem II protein PSBS2 (245 aa).

Residues 1-25 constitute a chloroplast transit peptide; it reads MAMTLSTKAFAQRGVSARKNTVRVY. 4 helical membrane-spanning segments follow: residues 72–92, 108–128, 185–205, and 217–237; these read LFVG…EILT, GIEV…AAVL, LGFA…LAQF, and EFGL…EGSG.

Belongs to the ELIP/psbS family.

Its subcellular location is the plastid. It is found in the chloroplast thylakoid membrane. Its function is as follows. Required for non-photochemical quenching (NPQ), a mechanism that converts and dissipates the harmful excess absorbed light energy into heat and protect the photosynthetic apparatus from photo-oxidative damage. Seems involved in the activation of NPQ, possibly by promoting conformational changes required for activation of LHCSR3-dependent quenching in the antenna of photosystem II (PSII). The chain is Photosystem II protein PSBS2 from Chlamydomonas reinhardtii (Chlamydomonas smithii).